The primary structure comprises 103 residues: UPF0145 protein PERMA_0324 (103 aa).

The protein belongs to the UPF0145 family.

This Persephonella marina (strain DSM 14350 / EX-H1) protein is UPF0145 protein PERMA_0324.